The chain runs to 745 residues: Double-stranded RNA-specific editase B2 (745 aa).

2 disordered regions span residues 1–35 (MASV…RKDK) and 50–104 (SPGT…PLEE). Residues 20 to 34 (CKSKRRRRRRSKRKD) are compositionally biased toward basic residues. The segment at 23–35 (KRRRRRRSKRKDK) is R-domain (ssRNA-binding). 2 consecutive DRBM domains span residues 125-191 (TPKN…SFVQ) and 283-347 (NPVV…ALFD). The region spanning 414–741 (VLSSGTKCIS…VRKPPEQDQF (328 aa)) is the A to I editase domain. H438 lines the Zn(2+) pocket. Residue E440 is the Proton donor of the active site. C496 and C561 together coordinate Zn(2+).

In terms of tissue distribution, brain specific.

It localises to the nucleus. Functionally, lacks editing activity. It prevents the binding of other ADAR enzymes to targets in vitro, and decreases the efficiency of these enzymes. Capable of binding to dsRNA but also to ssRNA. The protein is Double-stranded RNA-specific editase B2 (Adarb2) of Mus musculus (Mouse).